A 458-amino-acid chain; its full sequence is D-inositol 3-phosphate glycosyltransferase (458 aa).

1D-myo-inositol 3-phosphate is bound at residue H16. UDP-N-acetyl-alpha-D-glucosamine-binding positions include 22-23 (QP) and G30. 1D-myo-inositol 3-phosphate contacts are provided by residues 27-32 (DAGGMN), K85, Y118, T142, and R162. Positions 236, 241, and 302 each coordinate UDP-N-acetyl-alpha-D-glucosamine. Y311, R312, and S314 together coordinate Mg(2+). Residues E324 and E332 each contribute to the UDP-N-acetyl-alpha-D-glucosamine site. T338 provides a ligand contact to Mg(2+). The disordered stretch occupies residues 428–458 (VAAQNVTGSSSRTRRPWRRRRSTLLPMTGRS). Positions 439–449 (RTRRPWRRRRS) are enriched in basic residues.

Belongs to the glycosyltransferase group 1 family. MshA subfamily. Homodimer.

The catalysed reaction is 1D-myo-inositol 3-phosphate + UDP-N-acetyl-alpha-D-glucosamine = 1D-myo-inositol 2-acetamido-2-deoxy-alpha-D-glucopyranoside 3-phosphate + UDP + H(+). Functionally, catalyzes the transfer of a N-acetyl-glucosamine moiety to 1D-myo-inositol 3-phosphate to produce 1D-myo-inositol 2-acetamido-2-deoxy-glucopyranoside 3-phosphate in the mycothiol biosynthesis pathway. The chain is D-inositol 3-phosphate glycosyltransferase from Gordonia bronchialis (strain ATCC 25592 / DSM 43247 / BCRC 13721 / JCM 3198 / KCTC 3076 / NBRC 16047 / NCTC 10667) (Rhodococcus bronchialis).